Consider the following 1790-residue polypeptide: MSCVHYKFSSKLNYDTVTFDGLHISLCDLKKQIMGREKLKAADSDLQITNAQTKEEYTDDNALIPKNSSVIVRRIPIGGVKSTSKTYVISRTEPVMGTTKAIDDASASISLAQLTKTANLAEANASEEDKIKAMMSQSGHEYDPINYMKKTLVGPPPPSYTCFRCGKPGHYIKNCPTNGDKNFESGPRIKKSTGIPRSFMMEVKDPNMKGAMLTNTGKYAIPTIDAEAYAIGKKEKPPFLPEEPSSSSEEDDPIPDELLCLICKDIMTDAVVIPCCGNSYCDECIRTALLESDEHTCPTCHQNDVSPDALIANKFLRQAVNNFKNETGYTKRLRKQLPPPPPPVPPPRPLMQRNLQPLMRSPISRQQDPLMIPVTSSSAHSAPSISSLTSNPSALAPSVSGNPSSAPAPVPDITATVSISVHSEKSDGPFRDSDNKLLPAAALTSEHSKGASSIAITALMEEKGYQVPVLGTPSLLGQSLLHGQLIPTTGPVRINAARPGGGRPGWEHSNKLGYLVSPPQQIRRGERSCYRSINRGRHHSERSQRTQGPSLPATPVFVPVPPPPLYPPPPHTLPLPPGVPPPQFSPQFPPGQPPPAGYSVPPPGFPPAPANISTPWVSSGVQTAHSNTIPTTQAPPLSREEFYREQRRLKEEEKKKSKLDEFTNDFAKELMEYKKIQKERRRSFSRSKSPYSGSSYSRSSYTYSKSRSGSTRSRSYSRSFSRSHSRSYSRSPPYPRRGRGKSRNYRSRSRSHGYHRSRSRSPPYRRYHSRSRSPQAFRGQSPTKRNVPQGETEREYFNRYREVPPPYDIKAYYGRSVDFRDPFEKERYREWERKYREWYEKYYKGYAVGAQPRPSANREDFSPERLLPLNIRNSPFTRGRREDYAAGQSHRNRNLGGNYPEKLSTRDSHNAKDNPKSKEKESENVPGDGKGNKHKKHRKRRKGEESESFLNPELLETSRKCRESSGIDETKTDTLFVLPSRDDATPVRDEPMDAESITFKSVSDKDKREKDKPKVKSDKTKRKSDGSATAKKDNVLKPSKGPQEKVDGDREKSPRSEPPLKKAKEEATKIDSVKPSSSSQKDEKVTGTPRKAHSKSAKEHQEAKPAKDEKVKKDCSKDIKSEKPASKDEKAKKPEKNKLLDSKGEKRKRKTEEKSVDKDFESSSMKISKVEGTEIVKPSPKRKMEGDVEKLERTPEKDKIASSTTPAKKIKLNRETGKKIGNAENASTTKEPSEKLESTSSKIKQEKVKGKAKRKVAGSEGSSSTLVDYTSTSSTGGSPVRKSEEKTDTKRTVIKTMEEYNNDNTAPAEDVIIMIQVPQSKWDKDDFESEEEDVKTTQPIQSVGKPSSIIKNVTTKPSATAKYTEKESEQPEKLQKLPKEASHELMQHELRSSKGSASSEKGRAKDREHSGSEKDNPDKRKSGAQPDKESTVDRLSEQGHFKTLSQSSKETRTSEKHESVRGSSNKDFTPGRDKKVDYDSRDYSSSKRRDERGELARRKDSPPRGKESLSGQKSKLREERDLPKKGAESKKSNSSPPRDKKPHDHKAPYETKRPCEETKPVDKNSGKEREKHAAEARNGKESSGGKLPCIPNPPDPPMEKELAAGQVEKSAVKPKPQLSHSSRLSSDLTRETDEAAFEPDYNESDSESNVSVKEEEAVASISKDLKEKTTEKAKESLTVATASQPGADRSQSQSSPSVSPSRSHSPSGSQTRSHSSSASSAGSQDSKKKKKKKEKKKHKKHKKHKKHKKHAGADGDVEKSQKHKHKKKKAKKNKDKEKEKDDQKVRSVTV.

One can recognise a DWNN domain in the interval 4–76; that stretch reads VHYKFSSKLN…NSSVIVRRIP (73 aa). The residue at position 130 (lysine 130) is an N6-acetyllysine. A CCHC-type zinc finger spans residues 160-177; it reads YTCFRCGKPGHYIKNCPT. Phosphoserine occurs at positions 245, 246, 247, and 248. The RING-type; degenerate zinc finger occupies 260 to 301; that stretch reads CLICKDIMTDAVVIPCCGNSYCDECIRTALLESDEHTCPTCH. Residues 329-353 form a disordered region; it reads YTKRLRKQLPPPPPPVPPPRPLMQR. Residues 337–349 are compositionally biased toward pro residues; sequence LPPPPPPVPPPRP. Phosphoserine is present on serine 361. Residues 374–408 are disordered; the sequence is VTSSSAHSAPSISSLTSNPSALAPSVSGNPSSAPA. A compositionally biased stretch (low complexity) spans 376 to 390; the sequence is SSSAHSAPSISSLTS. Position 517 is a phosphoserine (serine 517). Disordered stretches follow at residues 533-599, 622-641, 648-667, and 675-797; these read INRG…AGYS, QTAH…SREE, RLKE…NDFA, and KIQK…REYF. Pro residues predominate over residues 558–599; that stretch reads VPVPPPPLYPPPPHTLPLPPGVPPPQFSPQFPPGQPPPAGYS. Polar residues predominate over residues 622–635; that stretch reads QTAHSNTIPTTQAP. The segment covering 686-720 has biased composition (low complexity); the sequence is RSKSPYSGSSYSRSSYTYSKSRSGSTRSRSYSRSF. Residues 736–771 show a composition bias toward basic residues; the sequence is RRGRGKSRNYRSRSRSHGYHRSRSRSPPYRRYHSRS. 7 positions are modified to phosphoserine: serine 769, serine 771, serine 773, serine 781, serine 816, serine 862, and serine 874. Disordered stretches follow at residues 850–1292 and 1322–1790; these read AQPR…TKRT and WDKD…SVTV. Residues 903-923 are compositionally biased toward basic and acidic residues; that stretch reads LSTRDSHNAKDNPKSKEKESE. Positions 932-941 are enriched in basic residues; the sequence is NKHKKHRKRR. Composition is skewed to basic and acidic residues over residues 956–972, 980–991, 1002–1018, 1042–1072, and 1096–1161; these read ETSR…ETKT, SRDDATPVRDEP, VSDK…VKSD, PQEK…KIDS, and SAKE…KDFE. Serine 958 bears the Phosphoserine mark. The segment at 983 to 1139 is interaction with RB1; sequence DATPVRDEPM…KAKKPEKNKL (157 aa). Threonine 985 carries the phosphothreonine modification. Residues lysine 1107 and lysine 1169 each participate in a glycyl lysine isopeptide (Lys-Gly) (interchain with G-Cter in SUMO2) cross-link. Serine 1179 is modified (phosphoserine). 2 stretches are compositionally biased toward basic and acidic residues: residues 1182-1200 and 1231-1249; these read RKME…KDKI and EPSE…EKVK. Residues 1260–1277 show a composition bias toward polar residues; sequence EGSSSTLVDYTSTSSTGG. Position 1272 is a phosphothreonine (threonine 1272). Phosphoserine is present on serine 1278. Residues 1281–1291 are compositionally biased toward basic and acidic residues; it reads RKSEEKTDTKR. Phosphoserine occurs at positions 1329, 1342, and 1348. The segment covering 1336–1358 has biased composition (polar residues); it reads TTQPIQSVGKPSSIIKNVTTKPS. 5 stretches are compositionally biased toward basic and acidic residues: residues 1363–1392, 1400–1440, 1449–1460, 1469–1507, and 1515–1580; these read YTEK…ELRS, EKGR…EQGH, KETRTSEKHESV, TPGR…RGKE, and KLRE…RNGK. Positions 1434–1544 are interaction with p53; that stretch reads RLSEQGHFKT…SPPRDKKPHD (111 aa). Threonine 1469 is modified (phosphothreonine). A compositionally biased stretch (polar residues) spans 1618–1627; that stretch reads LSHSSRLSSD. The span at 1634–1646 shows a compositional bias: acidic residues; it reads EAAFEPDYNESDS. Phosphoserine occurs at positions 1646, 1648, and 1651. Over residues 1663-1675 the composition is skewed to basic and acidic residues; the sequence is KDLKEKTTEKAKE. Low complexity predominate over residues 1689–1724; sequence RSQSQSSPSVSPSRSHSPSGSQTRSHSSSASSAGSQ. Residues 1727-1750 show a composition bias toward basic residues; sequence KKKKKKKEKKKHKKHKKHKKHKKH. Basic and acidic residues predominate over residues 1751–1760; sequence AGADGDVEKS. Positions 1761–1773 are enriched in basic residues; the sequence is QKHKHKKKKAKKN. Basic and acidic residues predominate over residues 1774–1790; it reads KDKEKEKDDQKVRSVTV.

In terms of assembly, interacts with MDM2 and YBX1. Also interacts with p53/TP53 and RB1. Interacts with NEK6. Interacts with ZBTB38. Phosphorylated by NEK6. In terms of tissue distribution, highly expressed in testis. Expressed at lower levels in brain, heart, kidney, liver, lung, skeletal muscle, spleen, thymus and tongue.

The protein localises to the nucleus. It is found in the nucleolus. It localises to the chromosome. Its subcellular location is the cytoplasm. The protein resides in the cytoskeleton. The protein localises to the microtubule organizing center. It is found in the centrosome. It catalyses the reaction S-ubiquitinyl-[E2 ubiquitin-conjugating enzyme]-L-cysteine + [acceptor protein]-L-lysine = [E2 ubiquitin-conjugating enzyme]-L-cysteine + N(6)-ubiquitinyl-[acceptor protein]-L-lysine.. It participates in protein modification; protein ubiquitination. Its function is as follows. E3 ubiquitin-protein ligase which promotes ubiquitination of YBX1, leading to its degradation by the proteasome. May play a role as a scaffold protein to promote the assembly of the p53/TP53-MDM2 complex, resulting in increase of MDM2-mediated ubiquitination and degradation of p53/TP53; may function as negative regulator of p53/TP53, leading to both apoptosis and cell growth retardation. Regulates DNA-replication and common fragile sites (CFS) stability in a ZBTB38- and MCM10-dependent manner. Controls ZBTB38 protein stability and abundance via ubiquitination and proteasomal degradation, and ZBTB38 in turn negatively regulates the expression of MCM10 which plays an important role in DNA-replication. This Mus musculus (Mouse) protein is E3 ubiquitin-protein ligase RBBP6 (Rbbp6).